A 2158-amino-acid polypeptide reads, in one-letter code: Non-reducing polyketide synthase Preu8 (2158 aa).

Residues Leu-4–His-241 form an N-terminal acylcarrier protein transacylase domain (SAT) region. The region spanning Asn-369–Asp-801 is the Ketosynthase family 3 (KS3) domain. Active-site for beta-ketoacyl synthase activity residues include Cys-541, His-676, and His-719. Residues Phe-900 to Ala-1215 form a malonyl-CoA:ACP transacylase (MAT) domain region. The active-site For acyl/malonyl transferase activity is the Ser-989. A product template (PT) domain region spans residues Ser-1285 to Pro-1603. Residues Gln-1287 to Gln-1423 form an N-terminal hotdog fold region. Residues Gln-1287–Asn-1598 enclose the PKS/mFAS DH domain. His-1319 serves as the catalytic Proton acceptor; for dehydratase activity. The tract at residues Ala-1451–Asn-1598 is C-terminal hotdog fold. The active-site Proton donor; for dehydratase activity is Asp-1511. Residues Lys-1619–Ser-1639 show a composition bias toward low complexity. Residues Lys-1619 to Thr-1654 are disordered. A Carrier 1 domain is found at Asp-1651–Asp-1725. Ser-1685 is subject to O-(pantetheine 4'-phosphoryl)serine. The segment at Gln-1723–Ser-1779 is disordered. The segment covering Asp-1731 to Asp-1740 has biased composition (acidic residues). Residues Ser-1743 to Ser-1770 are compositionally biased toward polar residues. The 75-residue stretch at Ser-1779–Pro-1853 folds into the Carrier 2 domain. At Ser-1813 the chain carries O-(pantetheine 4'-phosphoryl)serine. A disordered region spans residues Asn-1847–Gln-1879. The span at Glu-1860–Lys-1876 shows a compositional bias: low complexity. The interval Ser-1894 to His-2144 is thioesterase (TE) domain.

It depends on pantetheine 4'-phosphate as a cofactor.

Functionally, non-reducing polyketide synthase; part of a gene cluster that mediates the biosynthesis of a yet unidentified natural product. The polypeptide is Non-reducing polyketide synthase Preu8 (Preussia isomera (Coprophilous fungus)).